The chain runs to 1462 residues: Glucosyltransferase-S (1462 aa).

Residues 35–164 (SSVSAETEQQ…RQTAAQENKN (130 aa)) form a disordered region. Polar residues predominate over residues 37–52 (VSAETEQQTSDKVVTQ). Positions 71–85 (TKQAQTEQTQAQSQA) are enriched in low complexity. Polar residues predominate over residues 86 to 108 (NVADTSTSITKETPSQNITTQAN). Residues 109 to 133 (SDDKTVTNTKSEEAQTSEERTKQAE) are compositionally biased toward basic and acidic residues. Residues 134-149 (EAQATASSQALTQAKA) show a composition bias toward low complexity. Residues 154–163 (QRQTAAQENK) are compositionally biased toward polar residues. 14 Cell wall-binding repeats span residues 171–190 (IPNVKQIDGKYYYIGSDGQP), 192–211 (KNFALTVNNKVLYFDKNTGA), 1095–1115 (STGFVNDGNGMTFYSTSGYQA), 1116–1136 (KNSFVQDAKGNWYYFDNNGHM), 1137–1156 (VYGLQHLNGEVQYFLSNGVQ), 1180–1201 (SNGYYSFDNDSKWRYFDASGVM), 1202–1221 (AVGLKTINGNTQYFDQDGYQ), 1223–1244 (KGAWITGSDGKKRYFDDGSGNM), 1246–1266 (VNRFANDKNGDWYYLNSDGIA), 1267–1286 (LVGVQTINGKTYYFGQDGKQ), 1310–1330 (RNIFATDSQNNWYYFGSDGVA), 1331–1350 (VTGSQTIAGKKLYFASDGKQ), 1352–1372 (KGSFVTYNGKVHYYHADSGEL), and 1374–1394 (VNRFEADKDGNWYYLDSNGEA).

Belongs to the glycosyl hydrolase 70 family.

It localises to the secreted. The enzyme catalyses [(1-&gt;6)-alpha-D-glucosyl](n) + sucrose = [(1-&gt;6)-alpha-D-glucosyl](n+1) + D-fructose. Its function is as follows. Production of extracellular glucans, that are thought to play a key role in the development of the dental plaque because of their ability to adhere to smooth surfaces and mediate the aggregation of bacterial cells and food debris. This is Glucosyltransferase-S (gtfD) from Streptococcus mutans serotype c (strain ATCC 700610 / UA159).